The chain runs to 444 residues: MSELSPHSPFSVTELNRQVRRLLEVSFMQVWVTGEISNFSCPSSGHWYFSLKDDKAQVRCAMFRNRNMFVKQRPRDGEAVTLRAKVSLYEGRGEFQLIAESMELAGEGELRRAFEELKLKLSREGLFEESRKRPLPAMPKQVGVITSPTGAAVRDILTVLERRFPAIPVLLFPVPVQGKEAGPAIVAAIASANRLNCCDVLIVGRGGGSLEDLWAFNEEPVARAIAASAIPVVSAVGHETDITIADLVADLRAPTPSAAAEKVSPDQAEWKHRFLIYEQRLDAAAQRLLRQEGLRLNQLRGRLKHPGRRLQESAQRLDDLEVRLHRQAQNLLSVRRNQLTHLRDRLLASSPRQSLKNRYATVDALNHRLQTAVLSVLRHKSQHFAKLCGHMEAVSPIATLARGYAIVSDENGQIIRSEKEVRTGQKVKARLSDGEIHCEVVASV.

Belongs to the XseA family. Heterooligomer composed of large and small subunits.

The protein resides in the cytoplasm. It carries out the reaction Exonucleolytic cleavage in either 5'- to 3'- or 3'- to 5'-direction to yield nucleoside 5'-phosphates.. Bidirectionally degrades single-stranded DNA into large acid-insoluble oligonucleotides, which are then degraded further into small acid-soluble oligonucleotides. The polypeptide is Exodeoxyribonuclease 7 large subunit (Hahella chejuensis (strain KCTC 2396)).